Reading from the N-terminus, the 544-residue chain is Membrane protein insertase YidC (544 aa).

A helical membrane pass occupies residues 6-26 (NLLLIALLFVTFMLWQAWETD). Residues 112–132 (SGLTGKNGPDNPANGPRPLFT) are disordered. A run of 4 helical transmembrane segments spans residues 343-363 (KFLHGFIGNWGFSIIAITFIV), 418-438 (LGGCFPLLIQMPIFLALYYML), 456-476 (LSAQDPYYILPILMGVTMFFI), and 497-517 (PVIFTVFFLWFPSGLVMYYIV).

This sequence belongs to the OXA1/ALB3/YidC family. Type 1 subfamily. As to quaternary structure, interacts with the Sec translocase complex via SecD. Specifically interacts with transmembrane segments of nascent integral membrane proteins during membrane integration.

The protein localises to the cell inner membrane. In terms of biological role, required for the insertion and/or proper folding and/or complex formation of integral membrane proteins into the membrane. Involved in integration of membrane proteins that insert both dependently and independently of the Sec translocase complex, as well as at least some lipoproteins. Aids folding of multispanning membrane proteins. The polypeptide is Membrane protein insertase YidC (Pectobacterium carotovorum subsp. carotovorum (strain PC1)).